The following is a 663-amino-acid chain: Putative glucosamine-6-phosphate deaminase-like protein BT_0258 (663 aa).

The interval 1–290 (MKTNLSSQIT…NLTRIQRPWL (290 aa)) is glucosamine-6-phosphate deaminase-like. Glutamate 184 is a catalytic residue.

The protein in the N-terminal section; belongs to the glucosamine/galactosamine-6-phosphate isomerase family. NagB subfamily.

The polypeptide is Putative glucosamine-6-phosphate deaminase-like protein BT_0258 (Bacteroides thetaiotaomicron (strain ATCC 29148 / DSM 2079 / JCM 5827 / CCUG 10774 / NCTC 10582 / VPI-5482 / E50)).